Here is a 130-residue protein sequence, read N- to C-terminus: Small ribosomal subunit protein uS9 (130 aa).

Residues 102–130 (GFLTRDPRKKERKKYGLKKARKSPQFSKR) are disordered. Basic residues predominate over residues 111–130 (KERKKYGLKKARKSPQFSKR).

This sequence belongs to the universal ribosomal protein uS9 family.

The sequence is that of Small ribosomal subunit protein uS9 from Finegoldia magna (strain ATCC 29328 / DSM 20472 / WAL 2508) (Peptostreptococcus magnus).